The primary structure comprises 349 residues: tRNA pseudouridine synthase D (349 aa).

F27 provides a ligand contact to substrate. The active-site Nucleophile is D80. N129 is a substrate binding site. Residues G155–L303 form the TRUD domain. F329 is a binding site for substrate.

The protein belongs to the pseudouridine synthase TruD family.

It catalyses the reaction uridine(13) in tRNA = pseudouridine(13) in tRNA. In terms of biological role, responsible for synthesis of pseudouridine from uracil-13 in transfer RNAs. The chain is tRNA pseudouridine synthase D from Escherichia coli O127:H6 (strain E2348/69 / EPEC).